A 349-amino-acid chain; its full sequence is Flap endonuclease 1 (349 aa).

Positions 1–102 (MGVTELGKLI…AEIEARRRVK (102 aa)) are N-domain. Mg(2+) contacts are provided by Asp-31, Asp-84, Glu-156, Glu-158, Asp-177, Asp-179, and Asp-239. The interval 120–261 (DVAKYMKRVI…KALKLVLEFG (142 aa)) is I-domain.

It belongs to the XPG/RAD2 endonuclease family. FEN1 subfamily. As to quaternary structure, interacts with PCNA. PCNA stimulates the nuclease activity without altering cleavage specificity. It depends on Mg(2+) as a cofactor.

Its function is as follows. Structure-specific nuclease with 5'-flap endonuclease and 5'-3' exonuclease activities involved in DNA replication and repair. During DNA replication, cleaves the 5'-overhanging flap structure that is generated by displacement synthesis when DNA polymerase encounters the 5'-end of a downstream Okazaki fragment. Binds the unpaired 3'-DNA end and kinks the DNA to facilitate 5' cleavage specificity. Cleaves one nucleotide into the double-stranded DNA from the junction in flap DNA, leaving a nick for ligation. Also involved in the base excision repair (BER) pathway. Acts as a genome stabilization factor that prevents flaps from equilibrating into structures that lead to duplications and deletions. Also possesses 5'-3' exonuclease activity on nicked or gapped double-stranded DNA. The polypeptide is Flap endonuclease 1 (Pyrobaculum neutrophilum (strain DSM 2338 / JCM 9278 / NBRC 100436 / V24Sta) (Thermoproteus neutrophilus)).